Here is a 571-residue protein sequence, read N- to C-terminus: Ferroportin (571 aa).

The Cytoplasmic portion of the chain corresponds to 1-23 (MTRAGDHNRQRGCCGSLADYLTS). A helical membrane pass occupies residues 24–53 (AKFLLYLGHSLSTWGDRMWHFAVSVFLVEL). The Fe cation site is built by Asp-39 and His-43. The Extracellular segment spans residues 54-57 (YGNS). A helical membrane pass occupies residues 58-84 (LLLTAVYGLVVAGSVLVLGAIIGDWVD). The Cytoplasmic portion of the chain corresponds to 85–87 (KNA). Residues 88–118 (RLKVAQTSLVVQNVSVILCGIILMMVFLHKH) traverse the membrane as a helical segment. The Extracellular portion of the chain corresponds to 119–126 (ELLTMYHG). Residues 127 to 162 (WVLTSCYILIITIANIANLASTATAITIQRDWIVVV) traverse the membrane as a helical segment. Residues 163–164 (AG) lie on the Cytoplasmic side of the membrane. The helical transmembrane segment at 165-195 (EDRSKLANMNATIRRIDQLTNILAPMAVGQI) threads the bilayer. The Extracellular segment spans residues 196 to 202 (MTFGSPV). A helical membrane pass occupies residues 203–229 (IGCGFISGWNLVSMCVEYVLLWKVYQK). At 230–306 (TPALAVKAGL…DGWVSYYNQP (77 aa)) the chain is on the cytoplasmic side. The helical transmembrane segment at 307 to 333 (VFLAGMGLAFLYMTVLGFDCITTGYAY) threads the bilayer. Cys-326 serves as a coordination point for Fe cation. The Extracellular portion of the chain corresponds to 334–338 (TQGLS). The helical transmembrane segment at 339–366 (GSILSILMGASAITGIMGTVAFTWLRRK) threads the bilayer. Over 367 to 368 (CG) the chain is Cytoplasmic. The chain crosses the membrane as a helical span at residues 369–391 (LVRTGLISGLAQLSCLILCVISV). Over 392-453 (FMPGSPLDLS…ETSPESVPII (62 aa)) the chain is Extracellular. The N-linked (GlcNAc...) asparagine glycan is linked to Asn-434. A helical transmembrane segment spans residues 454 to 483 (SVSLLFAGVIAARIGLWSFDLTVTQLLQEN). Residues 484–488 (VIESE) are Cytoplasmic-facing. Residues 489–513 (RGIINGVQNSMNYLLDLLHFIMVIL) traverse the membrane as a helical segment. Residue His-507 participates in Fe cation binding. Over 514–516 (APN) the chain is Extracellular. Residues 517–542 (PEAFGLLVLISVSFVAMGHIMYFRFA) form a helical membrane-spanning segment. The Cytoplasmic segment spans residues 543-571 (QNTLGNKLFACGPDAKEVRKENQANTSVV).

This sequence belongs to the ferroportin (FP) (TC 2.A.100) family. SLC40A subfamily. Identified in a complex with STOM. Interacts with HAMP; affinity of the peptide hormone HAMP for SLC40A1 increases by 80-fold in the presence of iron and the interaction promotes SLC40A1 ubiquitination and degradation. Part of a complex composed of SLC40A1/ferroportin, TF/transferrin and HEPH/hephaestin that transfers iron from cells to transferrin. In terms of processing, polyubiquitinated by RNF217; leading to proteasomal degradation. Under conditions of high systemic iron levels, both the hormone peptide hepcidin/HAMP and holo(iron bound)-transferrin/TF induce the ubiquitination, internalization and proteasomal degradation of SLC40A1 to control iron release from cells. In terms of tissue distribution, detected in erythrocytes (at protein level). Expressed in placenta, intestine, muscle and spleen. Highly expressed in mature red blood.

The protein localises to the cell membrane. Its subcellular location is the basolateral cell membrane. The catalysed reaction is Fe(2+)(in) = Fe(2+)(out). Its function is as follows. Transports Fe(2+) from the inside of a cell to the outside of the cell, playing a key role for maintaining systemic iron homeostasis. Transports iron from intestinal, splenic, hepatic cells, macrophages and erythrocytes into the blood to provide iron to other tissues. Controls therefore dietary iron uptake, iron recycling by macrophages and erythrocytes, and release of iron stores in hepatocytes. When iron is in excess in serum, circulating HAMP/hepcidin levels increase resulting in a degradation of SLC40A1, thus limiting the iron efflux to plasma. This chain is Ferroportin, found in Homo sapiens (Human).